A 589-amino-acid chain; its full sequence is Bifunctional protein TrpGD (589 aa).

In terms of domain architecture, Glutamine amidotransferase type-1 spans 46-241 (RVIVIDNYDS…LNIQDIQVKK (196 aa)). 99-101 (GPG) provides a ligand contact to L-glutamine. The active-site Nucleophile; for GATase activity is C126. Residues Q130 and 176 to 177 (SL) each bind L-glutamine. Residues H215 and E217 each act as for GATase activity in the active site. The interval 253–589 (ALKKLVEFED…MDYQKTLGNS (337 aa)) is anthranilate phosphoribosyltransferase.

This sequence in the C-terminal section; belongs to the anthranilate phosphoribosyltransferase family. Heterotetramer consisting of two non-identical subunits: a beta subunit (TrpG) and a large alpha subunit (TrpE).

It carries out the reaction chorismate + L-glutamine = anthranilate + pyruvate + L-glutamate + H(+). It catalyses the reaction N-(5-phospho-beta-D-ribosyl)anthranilate + diphosphate = 5-phospho-alpha-D-ribose 1-diphosphate + anthranilate. Its pathway is amino-acid biosynthesis; L-tryptophan biosynthesis; L-tryptophan from chorismate: step 1/5. The protein operates within amino-acid biosynthesis; L-tryptophan biosynthesis; L-tryptophan from chorismate: step 2/5. Its function is as follows. Part of a heterotetrameric complex that catalyzes the two-step biosynthesis of anthranilate, an intermediate in the biosynthesis of L-tryptophan. In the first step, the glutamine-binding beta subunit (TrpG) of anthranilate synthase (AS) provides the glutamine amidotransferase activity which generates ammonia as a substrate that, along with chorismate, is used in the second step, catalyzed by the large alpha subunit of AS (TrpE) to produce anthranilate. In the absence of TrpG, TrpE can synthesize anthranilate directly from chorismate and high concentrations of ammonia. In addition to synthesizing anthranilate, it also catalyzes the second step of the pathway, the transfer of the phosphoribosyl group of 5-phosphorylribose-1-pyrophosphate (PRPP) to anthranilate. This is Bifunctional protein TrpGD (trpGD) from Thermotoga maritima (strain ATCC 43589 / DSM 3109 / JCM 10099 / NBRC 100826 / MSB8).